Consider the following 924-residue polypeptide: Exocyst complex component 2 (924 aa).

Residues 8–93 (PLVTGISPNE…GTSTVSFKLL (86 aa)) form the IPT/TIG domain. A coiled-coil region spans residues 240–260 (QKLENVLNRASNTADTLFQEV). Phosphoserine occurs at positions 431, 432, and 435. T440 carries the phosphothreonine modification. The residue at position 454 (K454) is an N6-acetyllysine.

It belongs to the SEC5 family. As to quaternary structure, the exocyst complex is composed of EXOC1, EXOC2, EXOC3, EXOC4, EXOC5, EXOC6, EXOC7 and EXOC8. Interacts with EXOC3L1. Interacts with GNEFR/DELGEF; this interaction occurs only in the presence of magnesium or manganese and is stimulated by dCTP or GTP. Interacts with RALA and RALB. Interacts with ARL13B; regulates ARL13B localization to the cilium membrane.

Its subcellular location is the midbody. It is found in the midbody ring. Component of the exocyst complex involved in the docking of exocytic vesicles with fusion sites on the plasma membrane. This is Exocyst complex component 2 (Exoc2) from Mus musculus (Mouse).